We begin with the raw amino-acid sequence, 612 residues long: Dihydroxy-acid dehydratase (612 aa).

Asp-81 is a binding site for Mg(2+). Residue Cys-122 participates in [2Fe-2S] cluster binding. Mg(2+)-binding residues include Asp-123 and Lys-124. N6-carboxylysine is present on Lys-124. Cys-195 provides a ligand contact to [2Fe-2S] cluster. A Mg(2+)-binding site is contributed by Glu-491. The Proton acceptor role is filled by Ser-517.

This sequence belongs to the IlvD/Edd family. Homodimer. The cofactor is [2Fe-2S] cluster. Requires Mg(2+) as cofactor.

The catalysed reaction is (2R)-2,3-dihydroxy-3-methylbutanoate = 3-methyl-2-oxobutanoate + H2O. The enzyme catalyses (2R,3R)-2,3-dihydroxy-3-methylpentanoate = (S)-3-methyl-2-oxopentanoate + H2O. The protein operates within amino-acid biosynthesis; L-isoleucine biosynthesis; L-isoleucine from 2-oxobutanoate: step 3/4. Its pathway is amino-acid biosynthesis; L-valine biosynthesis; L-valine from pyruvate: step 3/4. Functions in the biosynthesis of branched-chain amino acids. Catalyzes the dehydration of (2R,3R)-2,3-dihydroxy-3-methylpentanoate (2,3-dihydroxy-3-methylvalerate) into 2-oxo-3-methylpentanoate (2-oxo-3-methylvalerate) and of (2R)-2,3-dihydroxy-3-methylbutanoate (2,3-dihydroxyisovalerate) into 2-oxo-3-methylbutanoate (2-oxoisovalerate), the penultimate precursor to L-isoleucine and L-valine, respectively. This Rhizobium rhizogenes (strain K84 / ATCC BAA-868) (Agrobacterium radiobacter) protein is Dihydroxy-acid dehydratase.